We begin with the raw amino-acid sequence, 871 residues long: DNA mismatch repair protein MutS (871 aa).

621-628 (GPNMAGKS) contributes to the ATP binding site.

Belongs to the DNA mismatch repair MutS family.

Its function is as follows. This protein is involved in the repair of mismatches in DNA. It is possible that it carries out the mismatch recognition step. This protein has a weak ATPase activity. The sequence is that of DNA mismatch repair protein MutS from Geobacter sulfurreducens (strain ATCC 51573 / DSM 12127 / PCA).